A 216-amino-acid polypeptide reads, in one-letter code: Peptide methionine sulfoxide reductase MsrA (216 aa).

Cysteine 54 is a catalytic residue.

The protein belongs to the MsrA Met sulfoxide reductase family.

The enzyme catalyses L-methionyl-[protein] + [thioredoxin]-disulfide + H2O = L-methionyl-(S)-S-oxide-[protein] + [thioredoxin]-dithiol. It catalyses the reaction [thioredoxin]-disulfide + L-methionine + H2O = L-methionine (S)-S-oxide + [thioredoxin]-dithiol. Functionally, has an important function as a repair enzyme for proteins that have been inactivated by oxidation. Catalyzes the reversible oxidation-reduction of methionine sulfoxide in proteins to methionine. This is Peptide methionine sulfoxide reductase MsrA from Xanthomonas campestris pv. campestris (strain ATCC 33913 / DSM 3586 / NCPPB 528 / LMG 568 / P 25).